The sequence spans 180 residues: Bifunctional protein PyrR (180 aa).

Substrate contacts are provided by residues 39 to 40 (TR), 103 to 111 (DDVLYTGRT), and Arg136. The short motif at 99–111 (VILIDDVLYTGRT) is the PRPP-binding element.

It belongs to the purine/pyrimidine phosphoribosyltransferase family. PyrR subfamily. As to quaternary structure, homodimer and homohexamer; in equilibrium.

The catalysed reaction is UMP + diphosphate = 5-phospho-alpha-D-ribose 1-diphosphate + uracil. Its function is as follows. Regulates transcriptional attenuation of the pyrimidine nucleotide (pyr) operon by binding in a uridine-dependent manner to specific sites on pyr mRNA. This disrupts an antiterminator hairpin in the RNA and favors formation of a downstream transcription terminator, leading to a reduced expression of downstream genes. Also displays a weak uracil phosphoribosyltransferase activity which is not physiologically significant. The chain is Bifunctional protein PyrR from Halalkalibacterium halodurans (strain ATCC BAA-125 / DSM 18197 / FERM 7344 / JCM 9153 / C-125) (Bacillus halodurans).